A 597-amino-acid polypeptide reads, in one-letter code: Translation initiation factor IF-2 (597 aa).

Composition is skewed to low complexity over residues 57–73 (GGDA…AATA) and 81–95 (TPAA…PASD). A disordered region spans residues 57 to 96 (GGDAAPAAASAPAAATAEPEEADETPAAAAQADAEPASDL). Positions 98–271 (HRAPVVTIMG…ELEDLRADPK (174 aa)) constitute a tr-type G domain. Residues 107–114 (GHVDHGKT) are G1. 107 to 114 (GHVDHGKT) is a binding site for GTP. The segment at 132–136 (GITQH) is G2. The segment at 153-156 (DTPG) is G3. GTP is bound by residues 153-157 (DTPGH) and 207-210 (NKVD). The tract at residues 207-210 (NKVD) is G4. The interval 243 to 245 (SAK) is G5.

Belongs to the TRAFAC class translation factor GTPase superfamily. Classic translation factor GTPase family. IF-2 subfamily.

The protein resides in the cytoplasm. Its function is as follows. One of the essential components for the initiation of protein synthesis. Protects formylmethionyl-tRNA from spontaneous hydrolysis and promotes its binding to the 30S ribosomal subunits. Also involved in the hydrolysis of GTP during the formation of the 70S ribosomal complex. The polypeptide is Translation initiation factor IF-2 (Deinococcus radiodurans (strain ATCC 13939 / DSM 20539 / JCM 16871 / CCUG 27074 / LMG 4051 / NBRC 15346 / NCIMB 9279 / VKM B-1422 / R1)).